We begin with the raw amino-acid sequence, 507 residues long: Glycerol kinase (507 aa).

Thr-15 contributes to the ADP binding site. Residues Thr-15, Thr-16, and Ser-17 each contribute to the ATP site. Thr-15 contributes to the sn-glycerol 3-phosphate binding site. ADP is bound at residue Arg-19. Sn-glycerol 3-phosphate-binding residues include Arg-85, Glu-86, Tyr-137, and Asp-250. Arg-85, Glu-86, Tyr-137, Asp-250, and Gln-251 together coordinate glycerol. 2 residues coordinate ADP: Thr-272 and Gly-316. ATP is bound by residues Thr-272, Gly-316, Gln-320, and Gly-417. Residue Gly-417 participates in ADP binding.

It belongs to the FGGY kinase family.

It catalyses the reaction glycerol + ATP = sn-glycerol 3-phosphate + ADP + H(+). Its pathway is polyol metabolism; glycerol degradation via glycerol kinase pathway; sn-glycerol 3-phosphate from glycerol: step 1/1. With respect to regulation, inhibited by fructose 1,6-bisphosphate (FBP). Functionally, key enzyme in the regulation of glycerol uptake and metabolism. Catalyzes the phosphorylation of glycerol to yield sn-glycerol 3-phosphate. This Mycoplasmopsis pulmonis (strain UAB CTIP) (Mycoplasma pulmonis) protein is Glycerol kinase.